The following is a 403-amino-acid chain: Na(+)-translocating NADH-quinone reductase subunit B (403 aa).

9 consecutive transmembrane segments (helical) span residues 56–76, 121–141, 163–183, 220–240, 258–278, 287–307, 312–332, 348–368, and 371–391; these read MMIT…WNTG, AYFL…EVLF, ILPP…GVVI, WTAV…AGGI, IHGS…AVLI, IVTG…LIGS, LFGM…GMIF, WVFG…NPAF, and GMML…HFVI. Threonine 230 is subject to FMN phosphoryl threonine.

The protein belongs to the NqrB/RnfD family. As to quaternary structure, composed of six subunits; NqrA, NqrB, NqrC, NqrD, NqrE and NqrF. FMN is required as a cofactor.

It is found in the cell inner membrane. It carries out the reaction a ubiquinone + n Na(+)(in) + NADH + H(+) = a ubiquinol + n Na(+)(out) + NAD(+). Its function is as follows. NQR complex catalyzes the reduction of ubiquinone-1 to ubiquinol by two successive reactions, coupled with the transport of Na(+) ions from the cytoplasm to the periplasm. NqrA to NqrE are probably involved in the second step, the conversion of ubisemiquinone to ubiquinol. The sequence is that of Na(+)-translocating NADH-quinone reductase subunit B from Stutzerimonas stutzeri (strain A1501) (Pseudomonas stutzeri).